The following is a 68-amino-acid chain: Copper transport protein ATOX1 (68 aa).

The HMA domain occupies Met1 to Ser63. Residues Cys12 and Cys15 each contribute to the Cu cation site. A Phosphoserine modification is found at Ser47. Lys60 is modified (N6-acetyllysine).

Belongs to the ATX1 family. Homodimer. Interacts with ATP7B. Interacts with ATP7A. Interacts (via dimer form) with SLC31A1 (via C-terminal domain); this interaction improves ATOX1 stability and controls intracellular Cu(I) levels.

In terms of biological role, binds and deliver cytosolic copper to the copper ATPase proteins. May be important in cellular antioxidant defense. This chain is Copper transport protein ATOX1, found in Bos taurus (Bovine).